Consider the following 575-residue polypeptide: Preterminal protein (575 aa).

The Nuclear localization signal signature appears at 309-318 (RLPRVTRRRR). The segment at 314 to 340 (TRRRRRPPSPAPPPEEIEEAAMEVEEP) is disordered. The segment covering 328 to 340 (EEIEEAAMEVEEP) has biased composition (acidic residues). The residue at position 510 (Ser510) is an O-(5'-phospho-DNA)-serine.

It belongs to the adenoviridae terminal protein family. Heterodimer with the polymerase; this heterodimer binds to bp 9 to 18 of the genome. Interacts with host POU2F1; POU2F1 binds to the auxiliary sequences in the inverted terminal repeats and tethers the pTP-POL heterodimer to the origin DNA thereby participating in the assembly of the pre-initiation complex (POL-TP-DBP-NFIA-POU2F1). Post-translationally, preterminal protein is used to replicate viral genome, upon genomic encapsidation it is processed first into iTP and finally into TP by adenovirus protease.

The protein localises to the host nucleus matrix. In terms of biological role, protein covalently bound to the viral DNA that acts as a primer for viral genomic replication by DNA strand displacement. Assembles on the viral origin of replication in an initiation complex with viral polymerase, DBP, host NFIA and host POU2F1/OCT1. During initiation, the polymerase covalently couples the first dCTP with Ser-580 of pTP. The terminal protein stimulates the template activity over 20 fold compared to protein-free templates. Neo-synthesized viral genomes are linked to two preterminal proteins, one for each 5' end. These new genomes are encapsidated in the nucleus, and during capsid maturation by viral protease, preterminal protein is first cleaved into intermediary (iTP), then into mature TP. May play a role in host nuclear matrix localization of genomic DNA. This Fowl adenovirus A serotype 1 (strain CELO / Phelps) (FAdV-1) protein is Preterminal protein.